We begin with the raw amino-acid sequence, 307 residues long: Ribosomal RNA small subunit methyltransferase H (307 aa).

Residues 33-35 (AGH), D52, L83, D97, and Q104 each bind S-adenosyl-L-methionine.

Belongs to the methyltransferase superfamily. RsmH family.

The protein resides in the cytoplasm. It catalyses the reaction cytidine(1402) in 16S rRNA + S-adenosyl-L-methionine = N(4)-methylcytidine(1402) in 16S rRNA + S-adenosyl-L-homocysteine + H(+). Specifically methylates the N4 position of cytidine in position 1402 (C1402) of 16S rRNA. This chain is Ribosomal RNA small subunit methyltransferase H, found in Sulfurovum sp. (strain NBC37-1).